The following is a 100-amino-acid chain: NADH-quinone oxidoreductase subunit K (100 aa).

A run of 3 helical transmembrane segments spans residues 4–24 (YEYYVVLSGLLMVLGLIGIII), 29–49 (IAMLLSTELMLNAVNIAFVAF), and 60–80 (VFVFFILTIAAAEAAVGLGLI).

The protein belongs to the complex I subunit 4L family. In terms of assembly, NDH-1 is composed of 14 different subunits. Subunits NuoA, H, J, K, L, M, N constitute the membrane sector of the complex.

The protein localises to the cell inner membrane. The catalysed reaction is a quinone + NADH + 5 H(+)(in) = a quinol + NAD(+) + 4 H(+)(out). In terms of biological role, NDH-1 shuttles electrons from NADH, via FMN and iron-sulfur (Fe-S) centers, to quinones in the respiratory chain. The immediate electron acceptor for the enzyme in this species is believed to be ubiquinone. Couples the redox reaction to proton translocation (for every two electrons transferred, four hydrogen ions are translocated across the cytoplasmic membrane), and thus conserves the redox energy in a proton gradient. In Persephonella marina (strain DSM 14350 / EX-H1), this protein is NADH-quinone oxidoreductase subunit K.